The primary structure comprises 152 residues: SsrA-binding protein (152 aa).

Belongs to the SmpB family.

The protein resides in the cytoplasm. Required for rescue of stalled ribosomes mediated by trans-translation. Binds to transfer-messenger RNA (tmRNA), required for stable association of tmRNA with ribosomes. tmRNA and SmpB together mimic tRNA shape, replacing the anticodon stem-loop with SmpB. tmRNA is encoded by the ssrA gene; the 2 termini fold to resemble tRNA(Ala) and it encodes a 'tag peptide', a short internal open reading frame. During trans-translation Ala-aminoacylated tmRNA acts like a tRNA, entering the A-site of stalled ribosomes, displacing the stalled mRNA. The ribosome then switches to translate the ORF on the tmRNA; the nascent peptide is terminated with the 'tag peptide' encoded by the tmRNA and targeted for degradation. The ribosome is freed to recommence translation, which seems to be the essential function of trans-translation. This is SsrA-binding protein from Helicobacter pylori (strain HPAG1).